A 311-amino-acid polypeptide reads, in one-letter code: Putative prophage capsid protein YqbE (311 aa).

Belongs to the encapsulin family. Family 3 subfamily.

Functionally, possibly a prophage capsid protein. The chain is Putative prophage capsid protein YqbE (yqbE) from Bacillus subtilis (strain 168).